The chain runs to 313 residues: Ribosomal RNA small subunit methyltransferase H (313 aa).

Residues 35–37, Asp55, Phe81, Asp103, and Gln110 contribute to the S-adenosyl-L-methionine site; that span reads GGH.

It belongs to the methyltransferase superfamily. RsmH family.

It localises to the cytoplasm. The catalysed reaction is cytidine(1402) in 16S rRNA + S-adenosyl-L-methionine = N(4)-methylcytidine(1402) in 16S rRNA + S-adenosyl-L-homocysteine + H(+). In terms of biological role, specifically methylates the N4 position of cytidine in position 1402 (C1402) of 16S rRNA. In Pseudomonas aeruginosa (strain LESB58), this protein is Ribosomal RNA small subunit methyltransferase H.